Reading from the N-terminus, the 778-residue chain is uncharacterized protein (778 aa).

The region spanning 1 to 92 (MSFVIAVPEA…GARSYVVAEA (92 aa)) is the PE domain. 3 disordered regions span residues 125–163 (ADGT…AGLI), 372–510 (TGLA…GDAF), and 718–778 (QGGL…GADG). 3 stretches are compositionally biased toward gly residues: residues 402–429 (NQTG…GGLG), 436–510 (DGTG…GDAF), and 718–763 (QGGL…GSSG).

Belongs to the mycobacterial PE family. PGRS subfamily.

This is an uncharacterized protein from Mycobacterium bovis (strain ATCC BAA-935 / AF2122/97).